A 446-amino-acid polypeptide reads, in one-letter code: O-antigen polymerase (446 aa).

The next 11 membrane-spanning stretches (helical) occupy residues 11–31, 33–53, 58–78, 104–124, 147–167, 186–206, 211–231, 252–272, 355–375, 391–411, and 415–435; these read ICSY…VINE, FCEI…VIII, QGGF…FILI, IYVF…VLLY, QLSM…IKSY, LYDE…SLLF, NFIL…LVGL, LKIK…SLFL, IYLG…SLAF, KLAY…IYFA, and LFDF…LSIV.

Its subcellular location is the cell inner membrane. The enzyme catalyses n lipid-linked O-antigen repeat units = a lipid-linked O antigen + (n-1) polyisoprenyl diphosphate.. It functions in the pathway bacterial outer membrane biogenesis; LPS O-antigen biosynthesis. Polymerase involved in the biosynthesis of the lipopolysaccharide (LPS). Catalyzes the polymerization of the O-antigen repeat units on the periplasmic face of the inner membrane, leading to the formation of the lipid-linked O-antigen molecule. In vitro, shows a preference for bacteria-based, undecaprenyl-containing substrates rather than eukaryote-based, dolichol-containing substrates. This Escherichia coli protein is O-antigen polymerase.